The primary structure comprises 146 residues: Small ribosomal subunit protein uS9x (146 aa).

The protein belongs to the universal ribosomal protein uS9 family.

Its subcellular location is the cytoplasm. The sequence is that of Small ribosomal subunit protein uS9x (RPS16C) from Arabidopsis thaliana (Mouse-ear cress).